We begin with the raw amino-acid sequence, 579 residues long: MRLIYVIAILLVSTCQAGFFSSLVSRFTGGGNSSPSSSSSSSSFSNSRKPSLSDEKARSYLQTFGYVPPSNSLQSRNGMAGDIQSAEQVFKSAIRKFQEFAGIAKTGFLDAATKAKMALSRCGVTDAPLALTSGSSQFKWSKTRLTYSIESWSSDLSKDDVRRAISEAYGLWSKVTPLEFSEVPAGSTSDIKIRFGVRNHNDPWPFDGEGGVLAHATMPESGMFHFDDDENWTYKDARKIHNNEATDLLAVAIHEGGHTLGLEHSRDENAIMAPFYQKTTDSSGNYVYPNLKSDDISAIQAIYGAGSGRSSSGSDFGGSSGGGSRTTARPTTTTRSWFGRFFGDDDDDVRSRTTTRRTTLWPTTQSPFSGDDWGSGSGSSGRGGSSSGSSGGGCPSHIDAYTPSSSFSYAFSGSQVYTISGTKVTKVQSIHDLFPSAPTPVNAALWNPISGSMLLFSSNRVYSYYFSNIRQIFQMDSGFPKTLPSDLGFSVSGALRWINGHQILMSSGDEFAVYDEFWNQVTLKNRISSYFPNLPRGVKGVESPAGSVITAFTSNQVFEYNSRTKSIGRQSGFSSYIAC.

Positions 1–17 (MRLIYVIAILLVSTCQA) are cleaved as a signal peptide. The propeptide at 18–129 (GFFSSLVSRF…SRCGVTDAPL (112 aa)) is activation peptide. Residues 32–51 (NSSPSSSSSSSSFSNSRKPS) form a disordered region. A compositionally biased stretch (low complexity) spans 33–50 (SSPSSSSSSSSFSNSRKP). Residues 120-127 (SRCGVTDA) carry the Cysteine switch motif. 5 residues coordinate Zn(2+): Cys-122, His-200, Asp-202, His-215, and His-225. The N-linked (GlcNAc...) asparagine glycan is linked to Asn-231. Position 254 (His-254) interacts with Zn(2+). Residue Glu-255 is part of the active site. The Zn(2+) site is built by His-258 and His-264. The disordered stretch occupies residues 307–394 (SGRSSSGSDF…SSSGSSGGGC (88 aa)). Gly residues predominate over residues 315–324 (DFGGSSGGGS). Over residues 325–341 (RTTARPTTTTRSWFGRF) the composition is skewed to low complexity. Over residues 373–394 (WGSGSGSSGRGGSSSGSSGGGC) the composition is skewed to gly residues. Hemopexin repeat units follow at residues 395 to 437 (PSHI…FPSA) and 438 to 490 (PTPV…LGFS).

It belongs to the peptidase M10A family. Zn(2+) serves as cofactor.

The protein localises to the secreted. Its subcellular location is the extracellular space. The protein resides in the extracellular matrix. Inhibited by human TIMP1 and TIMP2 and the broad MMP inhibitors BB94 (Batimastat) and CT543. Its function is as follows. Metalloproteinase. The chain is Matrix metalloproteinase-C from Caenorhabditis elegans.